The following is a 110-amino-acid chain: UPF0122 protein lwe1821 (110 aa).

This sequence belongs to the UPF0122 family.

Functionally, might take part in the signal recognition particle (SRP) pathway. This is inferred from the conservation of its genetic proximity to ftsY/ffh. May be a regulatory protein. The chain is UPF0122 protein lwe1821 from Listeria welshimeri serovar 6b (strain ATCC 35897 / DSM 20650 / CCUG 15529 / CIP 8149 / NCTC 11857 / SLCC 5334 / V8).